A 250-amino-acid polypeptide reads, in one-letter code: MNICLLDESGAGDGALSVLAARWQLEHDDSAPMALVLTPQHLELRKRDEPKLGGIFVDFVSGAMAHRRKFGGGRGEAVAKAVGIKSGYLPDVVDATAGLGRDAFVLAALGCRVRMLERNPVVAALLDDGLRRGYADVEIGPWLRENLTLLHASSLSALTDITPQPDVVYLDPMYPHKQKSALVKKEMRVFQSLVGADEDADGLLQPARTLAKKRVVVKRPDYAPPLAGLTTPNAVNTKSHRFDIYAPLTR.

S-adenosyl-L-methionine contacts are provided by residues 101–102 (RD), 117–118 (ER), 153–154 (SS), and Asp171.

This sequence belongs to the methyltransferase superfamily. RsmJ family.

It is found in the cytoplasm. It carries out the reaction guanosine(1516) in 16S rRNA + S-adenosyl-L-methionine = N(2)-methylguanosine(1516) in 16S rRNA + S-adenosyl-L-homocysteine + H(+). Functionally, specifically methylates the guanosine in position 1516 of 16S rRNA. This Erwinia tasmaniensis (strain DSM 17950 / CFBP 7177 / CIP 109463 / NCPPB 4357 / Et1/99) protein is Ribosomal RNA small subunit methyltransferase J.